Here is a 133-residue protein sequence, read N- to C-terminus: Large ribosomal subunit protein uL15 (133 aa).

The disordered stretch occupies residues 1-64 (MGLENLKPAK…QPLQRRLPKI (64 aa)).

The protein belongs to the universal ribosomal protein uL15 family. As to quaternary structure, part of the 50S ribosomal subunit.

Functionally, binds to the 23S rRNA. The protein is Large ribosomal subunit protein uL15 of Helicobacter pylori (strain G27).